A 131-amino-acid chain; its full sequence is Protein GLUTAMINE DUMPER 5 (131 aa).

The Extracellular portion of the chain corresponds to methionine 1–tyrosine 34. Residues leucine 35–cysteine 55 traverse the membrane as a helical segment. At serine 56 to histidine 131 the chain is on the cytoplasmic side. A VIMAG motif is present at residues valine 88–glycine 92.

The protein belongs to the GLUTAMINE DUMPER 1 (TC 9.B.60) family. Expressed in the vascular tissues. Also detected in guard cells.

The protein resides in the membrane. Probable subunit of an amino acid transporter involved in the regulation of the amino acid metabolism. Stimulates amino acid export by activating nonselective amino acid facilitators. In Arabidopsis thaliana (Mouse-ear cress), this protein is Protein GLUTAMINE DUMPER 5 (GDU5).